We begin with the raw amino-acid sequence, 251 residues long: Pyrroloquinoline-quinone synthase (251 aa).

The protein belongs to the PqqC family.

The enzyme catalyses 6-(2-amino-2-carboxyethyl)-7,8-dioxo-1,2,3,4,7,8-hexahydroquinoline-2,4-dicarboxylate + 3 O2 = pyrroloquinoline quinone + 2 H2O2 + 2 H2O + H(+). It functions in the pathway cofactor biosynthesis; pyrroloquinoline quinone biosynthesis. Functionally, ring cyclization and eight-electron oxidation of 3a-(2-amino-2-carboxyethyl)-4,5-dioxo-4,5,6,7,8,9-hexahydroquinoline-7,9-dicarboxylic-acid to PQQ. The sequence is that of Pyrroloquinoline-quinone synthase from Pseudomonas syringae pv. syringae (strain B728a).